Reading from the N-terminus, the 317-residue chain is Succinate receptor 1 (317 aa).

Over 1–23 the chain is Extracellular; it reads MAQNLSCENWLATEAILNKYYLS. A glycan (N-linked (GlcNAc...) asparagine) is linked at asparagine 4. Residues 24–47 traverse the membrane as a helical segment; the sequence is AFYAIEFIFGLLGNVTVVFGYLFC. At 48–55 the chain is on the cytoplasmic side; that stretch reads MKNWNSSN. Residues 56 to 76 traverse the membrane as a helical segment; the sequence is VYLFNLSISDFAFLCTLPILI. At 77–101 the chain is on the extracellular side; it reads KSYANDKGTYGDVLCISNRYVLHTN. A disulfide bridge connects residues cysteine 91 and cysteine 168. Residues 102-119 traverse the membrane as a helical segment; that stretch reads LYTSILFLTFISMDRYLL. Residues 120 to 133 lie on the Cytoplasmic side of the membrane; that stretch reads MKYPFREHFLQKKE. The chain crosses the membrane as a helical span at residues 134–157; the sequence is FAILISLAVWALVTLEVLPMLTFI. At 158 to 180 the chain is on the extracellular side; it reads NSVPKEEGSNCIDYASSGNPEHN. Residues 181–204 form a helical membrane-spanning segment; sequence LIYSLCLTLLGFLIPLSVMCFFYY. Residues 205 to 228 are Cytoplasmic-facing; that stretch reads KMVVFLKRRSQQQATALPLDKPQR. Residues 229 to 246 traverse the membrane as a helical segment; it reads LVVLAVVIFSILFTPYHI. The Extracellular segment spans residues 247–277; it reads MRNLRIASRLDSWPQGCTQKAIKSIYTLTRP. A helical membrane pass occupies residues 278–294; sequence LAFLNSAINPIFYFLMG. Residues 295 to 317 are Cytoplasmic-facing; it reads DHYREMLISKFRQYFKSLTSFRT.

It belongs to the G-protein coupled receptor 1 family. In terms of tissue distribution, predominantly expressed in the kidney (proximal and distal tubules and the juxtaglomerular apparatus). Weakly expressed in liver, spleen and small intestine. Highly expressed in immature dendritic cells, expression rapidly downregulates after maturation. Also expressed in macrophages. Specifically expressed in intestinal tuft cells. Expression in whole muscle is attributable to major non-myofibrillar resident cell types, including stromal, endothelial and satellite cell populations.

It is found in the cell membrane. Its function is as follows. G protein-coupled receptor for succinate able to mediate signaling through Gq/GNAQ or Gi/GNAI second messengers depending on the cell type and the processes regulated. Succinate-SUCNR1 signaling serves as a link between metabolic stress, inflammation and energy homeostasis. In macrophages, plays a range of immune-regulatory roles. During inflammation, succinate-SUCNR1 signaling may act as an anti-inflammatory mediator or boost inflammation depending on the inflammatory status of cells. Hyperpolarizes M2 macrophages versus M1 phenotype through Gq signaling by regulating the transcription of genes involved in immune function. In activated M1 macrophages, plays a pro-inflammatory role in response to LPS. Expressed in dendritic cells, where it is involved in the sensing of immunological danger and enhances immunity. Mediates succinate triggered intracelleular calcium mobilization, induces migratory responses and acts in synergy with Toll-like receptor ligands for the production of proinflammatory cytokines as well as an enhancement of antigen-specific activation of helper T cells. In the small intestine, mediates the activation of tuft cells by dietary succinate and triggers type 2 immunity. In adipocytes, plays an important role in the control of energy metabolism. In response to succinate, controls leptin expression in an AMPK-JNK-CEBPA-dependent as well as circadian clock-regulated manner. In muscle tissue, is expressed in non-muscle cells and coordinates muscle remodeling in response to the succinate produced during exercise training in a paracrine manner. In retina, acts as a mediator of vessel growth during retinal development. In response to succinate, regulates the production of angiogenic factors, including VEGF, by retinal ganglion neurons. This chain is Succinate receptor 1 (Sucnr1), found in Mus musculus (Mouse).